The primary structure comprises 390 residues: Protein phosphatase 1B (390 aa).

Over residues 1–14 (MGAFLDKPKTEKHN) the composition is skewed to basic and acidic residues. The tract at residues 1–20 (MGAFLDKPKTEKHNAHGAGN) is disordered. Glycine 2 carries the N-myristoyl glycine lipid modification. Residue lysine 12 forms a Glycyl lysine isopeptide (Lys-Gly) (interchain with G-Cter in ISG15) linkage. In terms of domain architecture, PPM-type phosphatase spans 23–295 (RYGLSSMQGW…DNMSVVLVCF (273 aa)). Aspartate 60, glycine 61, aspartate 243, and aspartate 286 together coordinate Mn(2+). Residues 371–390 (NPHKDNDGGAGDLEDSLVAL) are disordered. Serine 386 is subject to Phosphoserine.

Belongs to the PP2C family. In terms of assembly, monomer. Interacts with PAK6. Interacts with the phosphorylated form of IKBKB/IKKB. The cofactor is Mg(2+). Mn(2+) is required as a cofactor. Isgylation negatively regulates its activity. In terms of processing, N-myristoylation is essential for the recognition of its substrates for dephosphorylation. Isoform 1: Expressed ubiquitously. Isoform 2: Expressed exclusively in testis and intestine. Isoform 3: Expressed exclusively in brain and intestine. Isoform 4: Expressed exclusively in testis and intestine.

The protein resides in the cytoplasm. The protein localises to the cytosol. Its subcellular location is the membrane. The enzyme catalyses O-phospho-L-seryl-[protein] + H2O = L-seryl-[protein] + phosphate. It carries out the reaction O-phospho-L-threonyl-[protein] + H2O = L-threonyl-[protein] + phosphate. Enzyme with a broad specificity. Dephosphorylates PRKAA1 and PRKAA2. Inhibits TBK1-mediated antiviral signaling by dephosphorylating it at 'Ser-172'. Plays an important role in the termination of TNF-alpha-mediated NF-kappa-B activation through dephosphorylating and inactivating IKBKB/IKKB. The chain is Protein phosphatase 1B (Ppm1b) from Mus musculus (Mouse).